Reading from the N-terminus, the 88-residue chain is Protein alpha-1 (88 aa).

The helical transmembrane segment at 38–58 (GFWIILIILLGILAIRIAIKV) threads the bilayer.

It localises to the membrane. The chain is Protein alpha-1 (alpha) from Bos taurus (Bovine).